The sequence spans 485 residues: Maturase K (485 aa).

This sequence belongs to the intron maturase 2 family. MatK subfamily.

The protein resides in the plastid. Its subcellular location is the chloroplast. Usually encoded in the trnK tRNA gene intron. Probably assists in splicing its own and other chloroplast group II introns. The polypeptide is Maturase K (Malus domestica (Apple)).